Here is a 530-residue protein sequence, read N- to C-terminus: Probable ATP-binding protein YbiT (530 aa).

2 consecutive ABC transporter domains span residues 2-252 (LVSS…ERLL) and 320-526 (LEVE…YLRS). ATP contacts are provided by residues 34 to 41 (GANGSGKS) and 352 to 359 (GTNGVGKS).

It belongs to the ABC transporter superfamily. ABCF family. YbiT subfamily.

This chain is Probable ATP-binding protein YbiT (ybiT), found in Escherichia coli O157:H7.